The primary structure comprises 162 residues: Ribosome maturation factor RimP (162 aa).

It belongs to the RimP family.

It localises to the cytoplasm. In terms of biological role, required for maturation of 30S ribosomal subunits. The sequence is that of Ribosome maturation factor RimP from Cupriavidus necator (strain ATCC 17699 / DSM 428 / KCTC 22496 / NCIMB 10442 / H16 / Stanier 337) (Ralstonia eutropha).